The chain runs to 240 residues: Uridylate kinase (240 aa).

Position 12 to 15 (12 to 15) interacts with ATP; the sequence is KLSG. An involved in allosteric activation by GTP region spans residues 20–25; the sequence is GEQGNG. Glycine 54 contacts UMP. 2 residues coordinate ATP: glycine 55 and arginine 59. UMP is bound by residues aspartate 74 and 135–142; that span reads TGNPYFST. Residues asparagine 163, tyrosine 169, and aspartate 172 each coordinate ATP.

Belongs to the UMP kinase family. In terms of assembly, homohexamer.

It localises to the cytoplasm. It catalyses the reaction UMP + ATP = UDP + ADP. It participates in pyrimidine metabolism; CTP biosynthesis via de novo pathway; UDP from UMP (UMPK route): step 1/1. Its activity is regulated as follows. Allosterically activated by GTP. Inhibited by UTP. Functionally, catalyzes the reversible phosphorylation of UMP to UDP. This chain is Uridylate kinase, found in Bacillus licheniformis (strain ATCC 14580 / DSM 13 / JCM 2505 / CCUG 7422 / NBRC 12200 / NCIMB 9375 / NCTC 10341 / NRRL NRS-1264 / Gibson 46).